The chain runs to 37 residues: MKVRASVKKICRNCKIVKRSGVVRVICIEPKHKQRQG.

Belongs to the bacterial ribosomal protein bL36 family.

This Shewanella frigidimarina (strain NCIMB 400) protein is Large ribosomal subunit protein bL36.